Consider the following 174-residue polypeptide: Crossover junction endodeoxyribonuclease RuvC (174 aa).

Active-site residues include Asp8, Glu67, and Asp139. Mg(2+) contacts are provided by Asp8, Glu67, and Asp139.

This sequence belongs to the RuvC family. Homodimer which binds Holliday junction (HJ) DNA. The HJ becomes 2-fold symmetrical on binding to RuvC with unstacked arms; it has a different conformation from HJ DNA in complex with RuvA. In the full resolvosome a probable DNA-RuvA(4)-RuvB(12)-RuvC(2) complex forms which resolves the HJ. Requires Mg(2+) as cofactor.

The protein resides in the cytoplasm. The catalysed reaction is Endonucleolytic cleavage at a junction such as a reciprocal single-stranded crossover between two homologous DNA duplexes (Holliday junction).. The RuvA-RuvB-RuvC complex processes Holliday junction (HJ) DNA during genetic recombination and DNA repair. Endonuclease that resolves HJ intermediates. Cleaves cruciform DNA by making single-stranded nicks across the HJ at symmetrical positions within the homologous arms, yielding a 5'-phosphate and a 3'-hydroxyl group; requires a central core of homology in the junction. The consensus cleavage sequence is 5'-(A/T)TT(C/G)-3'. Cleavage occurs on the 3'-side of the TT dinucleotide at the point of strand exchange. HJ branch migration catalyzed by RuvA-RuvB allows RuvC to scan DNA until it finds its consensus sequence, where it cleaves and resolves the cruciform DNA. The chain is Crossover junction endodeoxyribonuclease RuvC from Pseudoalteromonas translucida (strain TAC 125).